The following is a 390-amino-acid chain: 3-ketoacyl-CoA thiolase (390 aa).

C95 functions as the Acyl-thioester intermediate in the catalytic mechanism. Active-site proton acceptor residues include H346 and C376.

It belongs to the thiolase-like superfamily. Thiolase family. Heterotetramer of two alpha chains (FadB) and two beta chains (FadA).

The protein localises to the cytoplasm. It carries out the reaction an acyl-CoA + acetyl-CoA = a 3-oxoacyl-CoA + CoA. Its pathway is lipid metabolism; fatty acid beta-oxidation. Catalyzes the final step of fatty acid oxidation in which acetyl-CoA is released and the CoA ester of a fatty acid two carbons shorter is formed. The polypeptide is 3-ketoacyl-CoA thiolase (Psychrobacter arcticus (strain DSM 17307 / VKM B-2377 / 273-4)).